A 200-amino-acid polypeptide reads, in one-letter code: Probable nicotinate-nucleotide adenylyltransferase (200 aa).

Belongs to the NadD family.

It catalyses the reaction nicotinate beta-D-ribonucleotide + ATP + H(+) = deamido-NAD(+) + diphosphate. Its pathway is cofactor biosynthesis; NAD(+) biosynthesis; deamido-NAD(+) from nicotinate D-ribonucleotide: step 1/1. Catalyzes the reversible adenylation of nicotinate mononucleotide (NaMN) to nicotinic acid adenine dinucleotide (NaAD). This is Probable nicotinate-nucleotide adenylyltransferase from Clostridium tetani (strain Massachusetts / E88).